Reading from the N-terminus, the 879-residue chain is Alanine--tRNA ligase (879 aa).

Positions 426-449 (KQKERARNARGNMDGESWKEDPLS) are disordered. 4 residues coordinate Zn(2+): histidine 566, histidine 570, cysteine 668, and histidine 672.

It belongs to the class-II aminoacyl-tRNA synthetase family. Requires Zn(2+) as cofactor.

The protein resides in the cytoplasm. The catalysed reaction is tRNA(Ala) + L-alanine + ATP = L-alanyl-tRNA(Ala) + AMP + diphosphate. Catalyzes the attachment of alanine to tRNA(Ala) in a two-step reaction: alanine is first activated by ATP to form Ala-AMP and then transferred to the acceptor end of tRNA(Ala). Also edits incorrectly charged Ser-tRNA(Ala) and Gly-tRNA(Ala) via its editing domain. The sequence is that of Alanine--tRNA ligase from Clostridioides difficile (strain 630) (Peptoclostridium difficile).